Consider the following 2353-residue polypeptide: C2 domain-containing protein 3 (2353 aa).

The interval 1-27 (MKQRKGQGSGGSRGRKKRGLSDISPST) is disordered. A Phosphoserine modification is found at serine 466. Disordered regions lie at residues 488 to 508 (KVLESSDHKLKKRSAGKRNRN) and 549 to 568 (GVPPDSPQMTPGKKSYAGPP). Over residues 496 to 507 (KLKKRSAGKRNR) the composition is skewed to basic residues. Residues 521–678 (DAQTMTLSVD…IQSELLSFSD (158 aa)) form the C2 1 domain. Phosphoserine is present on serine 728. 4 C2 domains span residues 787-919 (SHNL…SRLL), 985-1147 (QPTA…HRED), 1171-1339 (SSGL…TGWY), and 1403-1533 (EPAT…TLTV). A disordered region spans residues 1569–1591 (HELDSMDCSSHSESEQLPRRNDE). The 129-residue stretch at 1617-1745 (TTAEVRLTQE…SGFQFVCGWY (129 aa)) folds into the C2 6 domain. The segment at 1822–1846 (SKELDFSSPGRSDTTRSQASRHEEH) is disordered. Over residues 1830 to 1839 (PGRSDTTRSQ) the composition is skewed to polar residues. Phosphoserine is present on serine 1891. Disordered regions lie at residues 1972-2032 (ALSS…NGGR), 2084-2118 (TSPWSSVISDTSEVISPQPDEVQREGPSCPSPGPF), 2130-2269 (LSSP…QSLL), and 2301-2334 (PAATTDQDKSEATRGALSQRPCRPRPNSLPLNLP). The segment covering 2007-2016 (PLVRAPDKGT) has biased composition (basic and acidic residues). Over residues 2084–2098 (TSPWSSVISDTSEVI) the composition is skewed to polar residues. Phosphoserine is present on residues serine 2114 and serine 2132. Polar residues predominate over residues 2181 to 2198 (SGAQQSSTFVGWSSPQTD). Basic and acidic residues predominate over residues 2236-2253 (SRRENHKGPPIDSSDIRQ). Positions 2254 to 2267 (RQVTTGSETSTKQS) are enriched in polar residues.

As to quaternary structure, interacts with IFT88, BBS4 and PCM1. Interacts with OFD1; OFD1 may act as a negative regulator of C2CD3. Associates with the BBSome complex.

It is found in the cytoplasm. Its subcellular location is the cytoskeleton. The protein resides in the cilium basal body. The protein localises to the microtubule organizing center. It localises to the centrosome. It is found in the centriole. In terms of biological role, component of the centrioles that acts as a positive regulator of centriole elongation. Promotes assembly of centriolar distal appendage, a structure at the distal end of the mother centriole that acts as an anchor of the cilium, and is required for recruitment of centriolar distal appendages proteins CEP83, SCLT1, CEP89, FBF1 and CEP164. Not required for centriolar satellite integrity or RAB8 activation. Required for primary cilium formation. Required for sonic hedgehog/SHH signaling and for proteolytic processing of GLI3. The protein is C2 domain-containing protein 3 (C2CD3) of Homo sapiens (Human).